Here is a 524-residue protein sequence, read N- to C-terminus: Ribonuclease Y (524 aa).

Residues 3–23 (IVINLFLIIFASVVFFAAGFF) traverse the membrane as a helical segment. The region spanning 214 to 274 (ALSVVHIQSD…LRREHAKLTL (61 aa)) is the KH domain. One can recognise an HD domain in the interval 340 to 432 (LLQHSREVAM…VDAANVISLA (93 aa)).

It belongs to the RNase Y family.

The protein localises to the cell membrane. In terms of biological role, endoribonuclease that initiates mRNA decay. In Chlorobium luteolum (strain DSM 273 / BCRC 81028 / 2530) (Pelodictyon luteolum), this protein is Ribonuclease Y.